The sequence spans 169 residues: NADH dehydrogenase [ubiquinone] 1 alpha subcomplex assembly factor 2 (169 aa).

The segment at 116–169 is disordered; that stretch reads TSEELLPPPVQTQIKGHASAPYFGKEEPSVAPSSTGKTFQPGSWMPRDGKSHNQ. S134 is modified (phosphoserine). The span at 146–156 shows a compositional bias: polar residues; the sequence is APSSTGKTFQP.

The protein belongs to the complex I NDUFA12 subunit family. In terms of assembly, interacts with ARMC9. As to expression, highly expressed in ESCC cells. Also expressed in heart, skeletal muscle, liver, and in fibroblasts.

The protein localises to the mitochondrion. Acts as a molecular chaperone for mitochondrial complex I assembly. Complex I functions in the transfer of electrons from NADH to the respiratory chain. The immediate electron acceptor for the enzyme is believed to be ubiquinone. Is involved in the initial steps of cilia formation, including removal of CP110 from the mother centrioles, docking of membrane vesicles to the mother centrioles, and establishment of the transition zone. The sequence is that of NADH dehydrogenase [ubiquinone] 1 alpha subcomplex assembly factor 2 (NDUFAF2) from Homo sapiens (Human).